The following is a 330-amino-acid chain: Fructose-1,6-bisphosphatase class 1 (330 aa).

The Mg(2+) site is built by glutamate 84, aspartate 103, leucine 105, and aspartate 106. Substrate is bound by residues 106–109, asparagine 196, and lysine 262; that span reads DGSS. Glutamate 268 serves as a coordination point for Mg(2+).

The protein belongs to the FBPase class 1 family. In terms of assembly, homotetramer. Mg(2+) serves as cofactor.

Its subcellular location is the cytoplasm. The enzyme catalyses beta-D-fructose 1,6-bisphosphate + H2O = beta-D-fructose 6-phosphate + phosphate. The protein operates within carbohydrate biosynthesis; gluconeogenesis. The protein is Fructose-1,6-bisphosphatase class 1 of Shewanella frigidimarina (strain NCIMB 400).